Here is a 117-residue protein sequence, read N- to C-terminus: Putative small ubiquitin-related modifier 6 (117 aa).

Residues 1–30 (MSTKSSSIHGRNEVKMEGEKRKDVESESTH) form a disordered region. Over residues 10–28 (GRNEVKMEGEKRKDVESES) the composition is skewed to basic and acidic residues. Residues 31 to 108 (VTLNVKGQDE…IDALLPQESG (78 aa)) enclose the Ubiquitin-like domain. Residue Gly-108 forms a Glycyl lysine isopeptide (Gly-Lys) (interchain with K-? in acceptor proteins) linkage.

It belongs to the ubiquitin family. SUMO subfamily. Interacts with SAE2, SCE1, SIZ1 and MMS21 Covalently attached to a number of proteins.

Its subcellular location is the nucleus. The protein localises to the cytoplasm. Ubiquitin-like protein which can be covalently attached to target lysines as a monomer. Does not seem to be involved in protein degradation and may function as an antagonist of ubiquitin in the degradation process. The sequence is that of Putative small ubiquitin-related modifier 6 (SUMO6) from Arabidopsis thaliana (Mouse-ear cress).